The primary structure comprises 320 residues: Phosphate acetyltransferase (320 aa).

The protein belongs to the phosphate acetyltransferase and butyryltransferase family.

It localises to the cytoplasm. It carries out the reaction acetyl-CoA + phosphate = acetyl phosphate + CoA. The protein operates within metabolic intermediate biosynthesis; acetyl-CoA biosynthesis; acetyl-CoA from acetate: step 2/2. In Mycoplasma pneumoniae (strain ATCC 29342 / M129 / Subtype 1) (Mycoplasmoides pneumoniae), this protein is Phosphate acetyltransferase (pta).